We begin with the raw amino-acid sequence, 199 residues long: MLVPIVVEQTGRGERSYDIYSRLLKDRIIFLGGPIDDHVANLVIAQLLFLEAEDPDKDIHLYINSPGGVVTAGMAIYDTMQYIKAPVSTICVGQAASMGALLLSGGEKGKRFSLTHSRIMIHQPLGGFQGQATDIHIHAQEILKMKKRLNEIIAENSGQALEKVEADTERDYFMSGEEAKSYGIIDAIIARKPTSGGSR.

Ser-97 serves as the catalytic Nucleophile. His-122 is a catalytic residue.

This sequence belongs to the peptidase S14 family. In terms of assembly, fourteen ClpP subunits assemble into 2 heptameric rings which stack back to back to give a disk-like structure with a central cavity, resembling the structure of eukaryotic proteasomes.

It is found in the cytoplasm. The catalysed reaction is Hydrolysis of proteins to small peptides in the presence of ATP and magnesium. alpha-casein is the usual test substrate. In the absence of ATP, only oligopeptides shorter than five residues are hydrolyzed (such as succinyl-Leu-Tyr-|-NHMec, and Leu-Tyr-Leu-|-Tyr-Trp, in which cleavage of the -Tyr-|-Leu- and -Tyr-|-Trp bonds also occurs).. Functionally, cleaves peptides in various proteins in a process that requires ATP hydrolysis. Has a chymotrypsin-like activity. Plays a major role in the degradation of misfolded proteins. In Geobacter metallireducens (strain ATCC 53774 / DSM 7210 / GS-15), this protein is ATP-dependent Clp protease proteolytic subunit.